The chain runs to 245 residues: Biosynthetic peptidoglycan transglycosylase (245 aa).

Residues 19-41 (CLRWVLAAPLLFAAASVLQVLFL) traverse the membrane as a helical segment.

The protein belongs to the glycosyltransferase 51 family.

Its subcellular location is the cell inner membrane. It catalyses the reaction [GlcNAc-(1-&gt;4)-Mur2Ac(oyl-L-Ala-gamma-D-Glu-L-Lys-D-Ala-D-Ala)](n)-di-trans,octa-cis-undecaprenyl diphosphate + beta-D-GlcNAc-(1-&gt;4)-Mur2Ac(oyl-L-Ala-gamma-D-Glu-L-Lys-D-Ala-D-Ala)-di-trans,octa-cis-undecaprenyl diphosphate = [GlcNAc-(1-&gt;4)-Mur2Ac(oyl-L-Ala-gamma-D-Glu-L-Lys-D-Ala-D-Ala)](n+1)-di-trans,octa-cis-undecaprenyl diphosphate + di-trans,octa-cis-undecaprenyl diphosphate + H(+). It participates in cell wall biogenesis; peptidoglycan biosynthesis. Peptidoglycan polymerase that catalyzes glycan chain elongation from lipid-linked precursors. This Xanthomonas oryzae pv. oryzae (strain KACC10331 / KXO85) protein is Biosynthetic peptidoglycan transglycosylase.